The sequence spans 119 residues: Large ribosomal subunit protein bL20 (119 aa).

It belongs to the bacterial ribosomal protein bL20 family.

Its function is as follows. Binds directly to 23S ribosomal RNA and is necessary for the in vitro assembly process of the 50S ribosomal subunit. It is not involved in the protein synthesizing functions of that subunit. This is Large ribosomal subunit protein bL20 from Shewanella frigidimarina (strain NCIMB 400).